Here is a 140-residue protein sequence, read N- to C-terminus: Gastrula zinc finger protein XlCGF49.1 (140 aa).

5 C2H2-type zinc fingers span residues 6-28 (FTCMECSKSFSQKSNLQTHYKIH), 34-56 (FTCMECGRTFSQKSTLLSHYKMH), 62-84 (FSCSECGKSFSHKNKLTLHQKIH), 90-112 (YACTECGKRFPEKSKLKIHWKIH), and 118-140 (FSCTECGKKFSRESNLYFHQKMH).

Belongs to the krueppel C2H2-type zinc-finger protein family.

The protein localises to the nucleus. In terms of biological role, may be involved in transcriptional regulation. The sequence is that of Gastrula zinc finger protein XlCGF49.1 from Xenopus laevis (African clawed frog).